Reading from the N-terminus, the 699-residue chain is Triacylglycerol hydrolase DDHD2 (699 aa).

Positions 1–11 are enriched in polar residues; it reads MSSGESHQEQL. Residues 1 to 25 form a disordered region; sequence MSSGESHQEQLSQSDPSPSPNSCSS. Over residues 12–25 the composition is skewed to low complexity; the sequence is SQSDPSPSPNSCSS. The 83-residue stretch at 30 to 112 folds into the WWE domain; the sequence is DMDASSSYEP…WDELPSEVRR (83 aa). The Nucleophile role is filled by S351. In terms of domain architecture, SAM spans 383-445; it reads DRGDASTLEE…KILNHFSARK (63 aa). S447 is subject to Phosphoserine. Residues 484-688 form the DDHD domain; it reads LNYKPEIFFA…VLLVLKEIYQ (205 aa). Residues 599–635 form a disordered region; sequence QASETAEETEAEPESSSEKSNEANTEEPPVEVKEEAP. Over residues 603–613 the composition is skewed to acidic residues; sequence TAEETEAEPES.

This sequence belongs to the PA-PLA1 family. Forms homooligomers and, to a much smaller extent, heterooligomers with DDHD1.

The protein resides in the cytoplasm. Its subcellular location is the cytosol. It is found in the endoplasmic reticulum-Golgi intermediate compartment. It localises to the golgi apparatus. The protein localises to the cis-Golgi network. It catalyses the reaction a triacylglycerol + H2O = a diacylglycerol + a fatty acid + H(+). It carries out the reaction a diacylglycerol + H2O = a monoacylglycerol + a fatty acid + H(+). The catalysed reaction is a 1,3-diacylglycerol + H2O = a 1-acylglycerol + a fatty acid + H(+). The enzyme catalyses a 1-acylglycerol + H2O = glycerol + a fatty acid + H(+). It catalyses the reaction 1,2,3-tri-(9Z-octadecenoyl)-glycerol + H2O = di-(9Z)-octadecenoylglycerol + (9Z)-octadecenoate + H(+). It carries out the reaction di-(9Z)-octadecenoylglycerol + H2O = (9Z-octadecenoyl)-glycerol + (9Z)-octadecenoate + H(+). The catalysed reaction is 1,3-di-(9Z-octadecenoyl)-glycerol + H2O = 1-(9Z-octadecenoyl)-glycerol + (9Z)-octadecenoate + H(+). The enzyme catalyses trihexadecanoylglycerol + H2O = dihexadecanoylglycerol + hexadecanoate + H(+). It catalyses the reaction 1,2-di-(9Z-octadecenoyl)-sn-glycero-3-phosphocholine + H2O = (9Z-octadecenoyl)-sn-glycero-3-phosphocholine + (9Z)-octadecenoate + H(+). It carries out the reaction 1-(9Z-octadecenoyl)-glycerol + H2O = glycerol + (9Z)-octadecenoate + H(+). The catalysed reaction is 1,2-di-(9Z-octadecenoyl)-sn-glycero-3-phosphate + H2O = 2-(9Z-octadecenoyl)-sn-glycero-3-phosphate + (9Z)-octadecenoate + H(+). The enzyme catalyses 1-hexadecanoyl-2-(9Z-octadecenoyl)-sn-glycero-3-phosphate + H2O = 2-(9Z-octadecenoyl)-sn-glycero-3-phosphate + hexadecanoate + H(+). It catalyses the reaction 1-hexadecanoyl-2-(9Z-octadecenoyl)-sn-glycero-3-phosphoethanolamine + H2O = 2-(9Z-octadecenoyl)-sn-glycero-3-phosphoethanolamine + hexadecanoate + H(+). It carries out the reaction 1-hexadecanoyl-2-(9Z-octadecenoyl)-sn-glycero-3-phospho-L-serine + H2O = 2-(9Z-octadecenoyl)-sn-glycero-3-phospho-L-serine + hexadecanoate + H(+). The catalysed reaction is 1-hexadecanoyl-2-(9Z-octadecenoyl)-sn-glycero-3-phosphocholine + H2O = 2-(9Z-octadecenoyl)-sn-glycero-3-phosphocholine + hexadecanoate + H(+). In terms of biological role, diacylglycerol (DAG) and triacylglycerol (TAG) lipase that is required for proper lipid homeostasis in the central nervous system. It cooperates with PNPLA2/ATGL in neuronal TAG catabolism and hydrolyzes sn-1,3-DAG downstream of PNPLA2/ATGL. In vitro, also acts as a phospholipase that hydrolyzes preferentially phosphatidic acids, including 1,2-dioleoyl-sn-phosphatidic acid, phosphatidylcholine and phosphatidylethanolamine. Specifically binds to phosphatidylinositol 3-phosphate (PI(3)P), phosphatidylinositol 4-phosphate (PI(4)P), phosphatidylinositol 5-phosphate (PI(5)P) and possibly phosphatidylinositol 4,5-bisphosphate (PI(4,5)P2). May be involved in the maintenance of the endoplasmic reticulum and/or Golgi structures. May regulate the transport between Golgi apparatus and plasma membrane. The sequence is that of Triacylglycerol hydrolase DDHD2 from Mus musculus (Mouse).